The primary structure comprises 245 residues: Dehydrogenase/reductase SDR family member 6 (245 aa).

NAD(+) is bound by residues 16–18 (QGI), Asp-37, and Asp-58. A substrate-binding site is contributed by Arg-144. The Proton acceptor role is filled by Tyr-147. NAD(+)-binding positions include Lys-151 and 180–184 (VDTPS). Residues Arg-188 and Arg-205 each coordinate substrate.

Belongs to the short-chain dehydrogenases/reductases (SDR) family. In terms of assembly, homotetramer. Detected in liver (at protein level).

The protein resides in the cytoplasm. The enzyme catalyses cis-4-hydroxy-L-proline + NAD(+) = 4-oxo-L-proline + NADH + H(+). It catalyses the reaction (R)-3-hydroxybutanoate + NAD(+) = acetoacetate + NADH + H(+). The protein operates within amino-acid metabolism. It functions in the pathway siderophore biosynthesis. NAD(H)-dependent dehydrogenase/reductase with a preference for cyclic substrates. Catalyzes stereoselective conversion of 4-oxo-L-proline to cis-4-hydroxy-L-proline, likely a detoxification mechanism for ketoprolines. Mediates the formation of 2,5-dihydroxybenzoate (2,5-DHBA), a siderophore that chelates free cytoplasmic iron and associates with LCN2, thereby regulating iron transport and homeostasis while protecting cells against free radical-induced oxidative stress. The iron-siderophore complex is imported into mitochondria, providing an iron source for mitochondrial metabolic processes in particular heme synthesis. May act as a 3-hydroxybutyrate dehydrogenase. The chain is Dehydrogenase/reductase SDR family member 6 from Homo sapiens (Human).